A 93-amino-acid polypeptide reads, in one-letter code: Large ribosomal subunit protein bL27 (93 aa).

This sequence belongs to the bacterial ribosomal protein bL27 family.

The protein is Large ribosomal subunit protein bL27 of Trichormus variabilis (strain ATCC 29413 / PCC 7937) (Anabaena variabilis).